A 337-amino-acid chain; its full sequence is Glyceraldehyde-3-phosphate dehydrogenase (337 aa).

Residues 12–13 (RI), aspartate 34, and lysine 79 each bind NAD(+). D-glyceraldehyde 3-phosphate contacts are provided by residues 150–152 (SCT), threonine 181, 210–211 (TG), and arginine 233. Cysteine 151 (nucleophile) is an active-site residue. Residue asparagine 315 participates in NAD(+) binding.

Belongs to the glyceraldehyde-3-phosphate dehydrogenase family. In terms of assembly, homotetramer.

The protein localises to the cytoplasm. The catalysed reaction is D-glyceraldehyde 3-phosphate + phosphate + NAD(+) = (2R)-3-phospho-glyceroyl phosphate + NADH + H(+). It functions in the pathway carbohydrate degradation; glycolysis; pyruvate from D-glyceraldehyde 3-phosphate: step 1/5. The sequence is that of Glyceraldehyde-3-phosphate dehydrogenase (GPD1) from Cochliobolus heterostrophus (Southern corn leaf blight fungus).